Consider the following 259-residue polypeptide: Energy-coupling factor transporter ATP-binding protein EcfA1 (259 aa).

The 228-residue stretch at 3 to 230 folds into the ABC transporter domain; it reads ITLNSVSFRY…EFDDVEIPFK (228 aa). Position 38–43 (38–43) interacts with ATP; it reads GSGKTT. The active-site Proton acceptor is Glu157.

It belongs to the ABC transporter superfamily. Energy-coupling factor EcfA family. Forms a heterodimer with EcfA2. Forms a stable energy-coupling factor (ECF) transporter complex composed of 2 membrane-embedded substrate-binding proteins (S component, RibU, BioY), 2 ATP-binding proteins (A component) and 2 transmembrane proteins (T component) upon coexpression in E.coli. Stable subcomplexes with both A plus T components can also be isolated. This complex interacts with at least 2 substrate-specific components, BioY and RibU.

The protein localises to the cell inner membrane. In terms of biological role, ATP-binding (A) component of a common energy-coupling factor (ECF) ABC-transporter complex. Unlike classic ABC transporters this ECF transporter provides the energy necessary to transport a number of different substrates. Expression of the complex plus RibU in E.coli allows riboflavin uptake; uptake does not occur in the absence of RibU or the EcfA1A2T complex. In Thermotoga maritima (strain ATCC 43589 / DSM 3109 / JCM 10099 / NBRC 100826 / MSB8), this protein is Energy-coupling factor transporter ATP-binding protein EcfA1.